A 337-amino-acid chain; its full sequence is GTPase Obg (337 aa).

In terms of domain architecture, Obg spans 4-162 (SNFVDYAKIH…RQIVFQLKLL (159 aa)). The OBG-type G domain maps to 163 to 329 (ADVGLVGFPN…LKDLLWEKLR (167 aa)). GTP-binding positions include 169-176 (GFPNTGKS), 194-198 (FTTLE), 216-219 (DIPG), 283-286 (SKSD), and 310-312 (SSF). Residues Ser-176 and Thr-196 each contribute to the Mg(2+) site.

Belongs to the TRAFAC class OBG-HflX-like GTPase superfamily. OBG GTPase family. Monomer. Requires Mg(2+) as cofactor.

Its subcellular location is the cytoplasm. An essential GTPase which binds GTP, GDP and possibly (p)ppGpp with moderate affinity, with high nucleotide exchange rates and a fairly low GTP hydrolysis rate. Plays a role in control of the cell cycle, stress response, ribosome biogenesis and in those bacteria that undergo differentiation, in morphogenesis control. This is GTPase Obg from Azobacteroides pseudotrichonymphae genomovar. CFP2.